A 244-amino-acid chain; its full sequence is tRNA (guanine-N(7)-)-methyltransferase (244 aa).

Residues glutamate 75, glutamate 100, aspartate 127, and aspartate 150 each contribute to the S-adenosyl-L-methionine site. Aspartate 150 is an active-site residue. Residues lysine 154, aspartate 186, and 223 to 226 contribute to the substrate site; that span reads TRFE.

This sequence belongs to the class I-like SAM-binding methyltransferase superfamily. TrmB family.

It catalyses the reaction guanosine(46) in tRNA + S-adenosyl-L-methionine = N(7)-methylguanosine(46) in tRNA + S-adenosyl-L-homocysteine. It functions in the pathway tRNA modification; N(7)-methylguanine-tRNA biosynthesis. Catalyzes the formation of N(7)-methylguanine at position 46 (m7G46) in tRNA. The chain is tRNA (guanine-N(7)-)-methyltransferase from Xylella fastidiosa (strain 9a5c).